The sequence spans 281 residues: Proteasome subunit beta 2 (281 aa).

Positions 1–53 (MEANTRSTGRLPAAFLTPGSSSFMDFLSEHQPEILPGNRQLPPTQGVIEAPHG) are cleaved as a propeptide — removed in mature form; by autocatalysis. The Nucleophile role is filled by T54.

It belongs to the peptidase T1B family. As to quaternary structure, the 20S proteasome core is composed of 14 alpha and 14 beta subunits that assemble into four stacked heptameric rings, resulting in a barrel-shaped structure. The two inner rings, each composed of seven catalytic beta subunits, are sandwiched by two outer rings, each composed of seven alpha subunits. The catalytic chamber with the active sites is on the inside of the barrel. Has a gated structure, the ends of the cylinder being occluded by the N-termini of the alpha-subunits. Is capped by the proteasome-associated ATPase, ARC.

It localises to the cytoplasm. The catalysed reaction is Cleavage of peptide bonds with very broad specificity.. It functions in the pathway protein degradation; proteasomal Pup-dependent pathway. Its activity is regulated as follows. The formation of the proteasomal ATPase ARC-20S proteasome complex, likely via the docking of the C-termini of ARC into the intersubunit pockets in the alpha-rings, may trigger opening of the gate for substrate entry. Interconversion between the open-gate and close-gate conformations leads to a dynamic regulation of the 20S proteasome proteolysis activity. Functionally, component of the proteasome core, a large protease complex with broad specificity involved in protein degradation. The chain is Proteasome subunit beta 2 from Streptomyces avermitilis (strain ATCC 31267 / DSM 46492 / JCM 5070 / NBRC 14893 / NCIMB 12804 / NRRL 8165 / MA-4680).